The chain runs to 127 residues: Group 3 truncated hemoglobin ctb (127 aa).

Residues Tyr64 and His72 each contribute to the heme site.

It belongs to the truncated hemoglobin family. Group III subfamily. Monomer. Heme serves as cofactor.

It localises to the cytoplasm. Functionally, has been suggested to be involved in cytochrome c peroxidase or P450-like oxygen chemistry or cyanide detoxification. The high oxygen affinity of this protein suggests that it probably does not function as an oxygen transporter. In Campylobacter jejuni subsp. jejuni serotype O:2 (strain ATCC 700819 / NCTC 11168), this protein is Group 3 truncated hemoglobin ctb (ctb).